Here is an 85-residue protein sequence, read N- to C-terminus: Large ribosomal subunit protein bL27 (85 aa).

Positions 1-20 (MATKKAGGSTKNGRDSNPKM) are disordered.

Belongs to the bacterial ribosomal protein bL27 family.

This chain is Large ribosomal subunit protein bL27, found in Acinetobacter baumannii (strain AB307-0294).